A 286-amino-acid chain; its full sequence is Homoserine kinase (286 aa).

78–88 (PLARGLGSSSS) contributes to the ATP binding site.

The protein belongs to the GHMP kinase family. Homoserine kinase subfamily.

It localises to the cytoplasm. It carries out the reaction L-homoserine + ATP = O-phospho-L-homoserine + ADP + H(+). It participates in amino-acid biosynthesis; L-threonine biosynthesis; L-threonine from L-aspartate: step 4/5. Its function is as follows. Catalyzes the ATP-dependent phosphorylation of L-homoserine to L-homoserine phosphate. The polypeptide is Homoserine kinase (Streptococcus thermophilus (strain CNRZ 1066)).